Consider the following 405-residue polypeptide: DNA polymerase IV 1 (405 aa).

A UmuC domain is found at 23 to 203 (IAHIDCDAFY…RPVTTIWGVG (181 aa)). Positions 27 and 120 each coordinate Mg(2+). Glutamate 121 is a catalytic residue.

It belongs to the DNA polymerase type-Y family. Monomer. The cofactor is Mg(2+).

The protein resides in the cytoplasm. It catalyses the reaction DNA(n) + a 2'-deoxyribonucleoside 5'-triphosphate = DNA(n+1) + diphosphate. In terms of biological role, poorly processive, error-prone DNA polymerase involved in untargeted mutagenesis. Copies undamaged DNA at stalled replication forks, which arise in vivo from mismatched or misaligned primer ends. These misaligned primers can be extended by PolIV. Exhibits no 3'-5' exonuclease (proofreading) activity. May be involved in translesional synthesis, in conjunction with the beta clamp from PolIII. This chain is DNA polymerase IV 1 (dinB1), found in Agrobacterium fabrum (strain C58 / ATCC 33970) (Agrobacterium tumefaciens (strain C58)).